Reading from the N-terminus, the 846-residue chain is Neurotactin (846 aa).

Positions 1 to 222 (MGELEEKETP…EDASDAPPKR (222 aa)) are disordered. The Cytoplasmic segment spans residues 1 to 324 (MGELEEKETP…LRGYKCSVDD (324 aa)). Residues 11–20 (PTETTAAQQE) show a composition bias toward low complexity. Residues 23–42 (EEPKETDKMLDKKEDAKEKT) show a composition bias toward basic and acidic residues. T28 bears the Phosphothreonine; by PKC mark. A Phosphothreonine modification is found at T42. S44 is subject to Phosphoserine. T47 carries the post-translational modification Phosphothreonine. S48 and S52 each carry phosphoserine. A compositionally biased stretch (basic and acidic residues) spans 63 to 74 (AEKKIDDAELAK). A Phosphoserine; by PKC modification is found at S75. S77 is modified (phosphoserine). Basic and acidic residues-rich tracts occupy residues 95-111 (DSADDKKISKEEREVKP), 141-155 (LLEKEKEEDKDKEAN), 163-178 (GKDEQKSRPGLGERLR), and 185-205 (PSAEKEKKQLVNGDADAKSEA). Phosphoserine; by PKC is present on S103. At S169 the chain carries Phosphoserine; by PKC. 2 positions are modified to phosphoserine: S186 and S203. T206 carries the post-translational modification Phosphothreonine. The residue at position 256 (S256) is a Phosphoserine. Phosphothreonine is present on T259. Position 263 is a phosphoserine (S263). Position 269 is a phosphothreonine (T269). Residues 325–346 (ALIVFGILLFVLLLGVIGYVLT) traverse the membrane as a helical; Signal-anchor for type II membrane protein segment. Topologically, residues 347-846 (HETLTSPPLR…DIVPRYARVD (500 aa)) are extracellular. Residues N410, N417, and N428 are each glycosylated (N-linked (GlcNAc...) asparagine). Disulfide bonds link C422–C437 and C600–C605. N-linked (GlcNAc...) asparagine glycans are attached at residues N636, N691, and N720. C738 and C830 are oxidised to a cystine.

The protein in the C-terminal section; belongs to the type-B carboxylesterase/lipase family. Late in embryogenesis, expression is restricted to cells of the peripheral and central nervous system undergoing proliferation and differentiation. Also expressed in larval CNS, mesoderm and imaginal disks.

It is found in the membrane. Functionally, may mediate or modulate cell adhesion between embryonic cells during development. The chain is Neurotactin (Nrt) from Drosophila melanogaster (Fruit fly).